The following is a 557-amino-acid chain: Potassium-transporting ATPase potassium-binding subunit (557 aa).

12 helical membrane-spanning segments follow: residues 5–25 (GFLL…PLGS), 63–83 (LSAI…MLLG), 132–152 (GLTV…FALI), 170–190 (LLRI…LFFI), 253–273 (FVQM…FGEV), 283–303 (LLWA…WAEV), 329–349 (VLVS…AVIA), 356–376 (ALGG…FGGV), 379–399 (GLYG…LMIG), 416–436 (LTAL…ALAM), 484–504 (LLAF…MAIA), and 526–546 (LFVG…FIPA).

This sequence belongs to the KdpA family. The system is composed of three essential subunits: KdpA, KdpB and KdpC.

It localises to the cell inner membrane. In terms of biological role, part of the high-affinity ATP-driven potassium transport (or Kdp) system, which catalyzes the hydrolysis of ATP coupled with the electrogenic transport of potassium into the cytoplasm. This subunit binds the periplasmic potassium ions and delivers the ions to the membrane domain of KdpB through an intramembrane tunnel. In Escherichia fergusonii (strain ATCC 35469 / DSM 13698 / CCUG 18766 / IAM 14443 / JCM 21226 / LMG 7866 / NBRC 102419 / NCTC 12128 / CDC 0568-73), this protein is Potassium-transporting ATPase potassium-binding subunit.